We begin with the raw amino-acid sequence, 96 residues long: GTPase HRas (96 aa).

An N-acetylmethionine modification is found at Met-1. Thr-2 carries the N-acetylthreonine; in GTPase HRas, N-terminally processed modification. Residue 10–17 (GAGGVGKS) participates in GTP binding. Residues 32-40 (YDPTIEDSY) carry the Effector region motif. Residue 57–61 (DTAGQ) participates in GTP binding.

This sequence belongs to the small GTPase superfamily. Ras family. In terms of assembly, in its GTP-bound form interacts with PLCE1. Interacts with TBC1D10C. Interacts with RGL3. Interacts with HSPD1. Found in a complex with at least BRAF, HRAS, MAP2K1, MAPK3 and RGS14. Interacts (active GTP-bound form) with RGS14 (via RBD 1 domain). Forms a signaling complex with RASGRP1 and DGKZ. Interacts with RASSF5. Interacts with PDE6D. Interacts with IKZF3. Interacts with RACK1. Interacts with PIK3CG; the interaction is required for membrane recruitment and beta-gamma G protein dimer-dependent activation of the PI3K gamma complex PIK3CG:PIK3R6. Interacts with RAPGEF2. Interacts (active GTP-bound form) with both SHOC2 and PP1c (all isoforms) to form a tertiary complex; SHOC2 and PP1c preferably bind M-Ras/MRAS, but they also bind K-Ras/KRAS, N-Ras/NRAS and H-Ras/HRAS. Interacts (in GTP-bound form) with Oog1. Interacts (GTP-bound form) with MAPKAP1/SIN1; inhibiting H-Ras/HRAS activity. In terms of processing, ubiquitinated by the BCR(LZTR1) E3 ubiquitin ligase complex at Lys-170 in a non-degradative manner, leading to inhibit Ras signaling by decreasing Ras association with membranes.

It is found in the cell membrane. Its subcellular location is the golgi apparatus. It localises to the golgi apparatus membrane. It catalyses the reaction GTP + H2O = GDP + phosphate + H(+). Alternates between an inactive form bound to GDP and an active form bound to GTP. Activated by a guanine nucleotide-exchange factor (GEF) and inactivated by a GTPase-activating protein (GAP). Its function is as follows. Ras proteins bind GDP/GTP and possess intrinsic GTPase activity. In Mesocricetus auratus (Golden hamster), this protein is GTPase HRas (HRAS).